The primary structure comprises 124 residues: Large ribosomal subunit protein bL17 (124 aa).

Belongs to the bacterial ribosomal protein bL17 family. Part of the 50S ribosomal subunit. Contacts protein L32.

In Trichlorobacter lovleyi (strain ATCC BAA-1151 / DSM 17278 / SZ) (Geobacter lovleyi), this protein is Large ribosomal subunit protein bL17.